We begin with the raw amino-acid sequence, 335 residues long: Mesoderm-specific transcript homolog protein (335 aa).

Helical transmembrane passes span Trp13–Pro33 and Val63–Tyr83. The AB hydrolase-1 domain maps to Ile71–Asp310. An RVIALD motif is present at residues Arg98–Asp103. Residue Asn163 is glycosylated (N-linked (GlcNAc...) asparagine). Residues Val266–Val286 form a helical membrane-spanning segment.

The protein belongs to the AB hydrolase superfamily. In terms of tissue distribution, highly expressed in hydatidiform moles, but barely expressed in dermoid cysts. Biallelic expression is detected in blood lymphocytes. Seems to imprinted in an isoform-specific manner rather than in a tissue-specific manner in lymphocytes. Isoform 1 is expressed only from the paternal allele. Isoform 2 is expressed from both the paternal allele and the maternal allele.

It localises to the endoplasmic reticulum membrane. This chain is Mesoderm-specific transcript homolog protein (MEST), found in Homo sapiens (Human).